The sequence spans 465 residues: Protein dml1 (465 aa).

Ser446 is subject to Phosphoserine.

This sequence belongs to the misato family.

It localises to the mitochondrion. Its function is as follows. Involved in the partitioning of the mitochondrial organelle and mitochondrial DNA (mtDNA) inheritance. The chain is Protein dml1 (dml1) from Schizosaccharomyces pombe (strain 972 / ATCC 24843) (Fission yeast).